The chain runs to 430 residues: Tyrosine--tRNA ligase (430 aa).

Residue tyrosine 32 coordinates L-tyrosine. Positions 37-46 match the 'HIGH' region motif; that stretch reads PTADSLHIGH. The L-tyrosine site is built by tyrosine 172 and glutamine 176. Positions 232–236 match the 'KMSKS' region motif; that stretch reads KFGKT. Residue lysine 235 coordinates ATP. Positions 362–429 constitute an S4 RNA-binding domain; it reads IKAVDLCTEK…GKKNYYLLIA (68 aa).

It belongs to the class-I aminoacyl-tRNA synthetase family. TyrS type 1 subfamily. Homodimer.

It localises to the cytoplasm. It catalyses the reaction tRNA(Tyr) + L-tyrosine + ATP = L-tyrosyl-tRNA(Tyr) + AMP + diphosphate + H(+). Functionally, catalyzes the attachment of tyrosine to tRNA(Tyr) in a two-step reaction: tyrosine is first activated by ATP to form Tyr-AMP and then transferred to the acceptor end of tRNA(Tyr). This Parabacteroides distasonis (strain ATCC 8503 / DSM 20701 / CIP 104284 / JCM 5825 / NCTC 11152) protein is Tyrosine--tRNA ligase.